We begin with the raw amino-acid sequence, 330 residues long: Aspartate--ammonia ligase (330 aa).

Belongs to the class-II aminoacyl-tRNA synthetase family. AsnA subfamily.

Its subcellular location is the cytoplasm. The enzyme catalyses L-aspartate + NH4(+) + ATP = L-asparagine + AMP + diphosphate + H(+). The protein operates within amino-acid biosynthesis; L-asparagine biosynthesis; L-asparagine from L-aspartate (ammonia route): step 1/1. The protein is Aspartate--ammonia ligase of Streptococcus agalactiae serotype III (strain NEM316).